The primary structure comprises 218 residues: GTP cyclohydrolase 1 (218 aa).

Zn(2+) is bound by residues Cys-109, His-112, and Cys-180.

The protein belongs to the GTP cyclohydrolase I family. As to quaternary structure, toroid-shaped homodecamer, composed of two pentamers of five dimers.

The catalysed reaction is GTP + H2O = 7,8-dihydroneopterin 3'-triphosphate + formate + H(+). Its pathway is cofactor biosynthesis; 7,8-dihydroneopterin triphosphate biosynthesis; 7,8-dihydroneopterin triphosphate from GTP: step 1/1. This is GTP cyclohydrolase 1 from Aeromonas hydrophila subsp. hydrophila (strain ATCC 7966 / DSM 30187 / BCRC 13018 / CCUG 14551 / JCM 1027 / KCTC 2358 / NCIMB 9240 / NCTC 8049).